The primary structure comprises 223 residues: Triosephosphate isomerase (223 aa).

10 to 12 contacts substrate; that stretch reads NFK. His-94 (electrophile) is an active-site residue. Glu-142 serves as the catalytic Proton acceptor. Substrate-binding positions include Ile-147, Gly-182, and 203 to 204; that span reads AS.

It belongs to the triosephosphate isomerase family. In terms of assembly, homotetramer; dimer of dimers.

The protein localises to the cytoplasm. The catalysed reaction is D-glyceraldehyde 3-phosphate = dihydroxyacetone phosphate. It participates in carbohydrate biosynthesis; gluconeogenesis. The protein operates within carbohydrate degradation; glycolysis; D-glyceraldehyde 3-phosphate from glycerone phosphate: step 1/1. Involved in the gluconeogenesis. Catalyzes stereospecifically the conversion of dihydroxyacetone phosphate (DHAP) to D-glyceraldehyde-3-phosphate (G3P). The sequence is that of Triosephosphate isomerase from Archaeoglobus fulgidus (strain ATCC 49558 / DSM 4304 / JCM 9628 / NBRC 100126 / VC-16).